A 177-amino-acid chain; its full sequence is Inner membrane-spanning protein YciB (177 aa).

The next 5 membrane-spanning stretches (helical) occupy residues 23-43, 50-70, 73-93, 119-139, and 149-169; these read MFVATGVAIAATAVMVAWAWF, TMQWISLGLIVVLGGATLLLH, HFIMWKPTVLYWVMGAGLLIS, LTWAWSGFFAFMGALNLFVAY, and FKLFGGMGLMLLFVIAQSLFL.

It belongs to the YciB family.

Its subcellular location is the cell inner membrane. Functionally, plays a role in cell envelope biogenesis, maintenance of cell envelope integrity and membrane homeostasis. In Chromobacterium violaceum (strain ATCC 12472 / DSM 30191 / JCM 1249 / CCUG 213 / NBRC 12614 / NCIMB 9131 / NCTC 9757 / MK), this protein is Inner membrane-spanning protein YciB.